Reading from the N-terminus, the 99-residue chain is Protein Frey (99 aa).

A helical membrane pass occupies residues 7–29 (GALYPRAGLSLFLLYLVLAAVLL). The disordered stretch occupies residues 65–88 (PKHPWPRGPRPLLSRAQQRKRDGP).

As to quaternary structure, interacts with SPPL2C (via active sites); the interaction stabilizes FREY1 protein and inhibits SPPL2C proteolytic activity. Interacts with IZUMO1; the interaction retains IZUMO1 at the endoplasmic reticulum membrane and coordinates IZUMO1 complex assembly.

The protein resides in the endoplasmic reticulum membrane. Its function is as follows. Key regulator for male fertility expressed transiently in round spermatids where it recruits IZUMO1 at the endoplasmic reticulum (ER) membrane and coordinates the oolemmal binding multimeric complex (IZUMO1 complex) assembly. Upon complete assembly of the IZUMO1 complex, its ER retention is released, facilitating IZUMO1 complex export to the acrosome. Through the interaction with SPPL2C, inhibits its intramembrane protease activity directly accessing the catalytic center of an I-CLiP. In Ailuropoda melanoleuca (Giant panda), this protein is Protein Frey.